A 221-amino-acid chain; its full sequence is Probable glutathione S-transferase (221 aa).

One can recognise a GST N-terminal domain in the interval 4–83; it reads EEVILLDFWP…YIEEVWKDKA (80 aa). Glutathione contacts are provided by residues serine 14, lysine 41, isoleucine 55, and 67–68; that span reads ES. One can recognise a GST C-terminal domain in the interval 90 to 214; it reads DPYDRAQARF…PKVLEFVKVL (125 aa).

Belongs to the GST superfamily. HSP26 family. As to expression, root tip-specific expression.

It carries out the reaction RX + glutathione = an S-substituted glutathione + a halide anion + H(+). The chain is Probable glutathione S-transferase from Nicotiana tabacum (Common tobacco).